The following is a 218-amino-acid chain: Keratin-associated protein 10-8 (218 aa).

The interval Cys26 to Ala202 is 16 X 5 AA repeats of C-C-X(3). 16 tandem repeats follow at residues Cys50–Thr54, Cys55–Ser59, Cys60–Ala64, Cys86–Ser90, Cys96–Val100, Cys101–Val105, Cys111–Val115, Cys121–Val125, Cys131–Val135, Cys136–Val140, Cys141–Val145, Cys151–Met155, Pro161–Ser167, Cys168–Ser172, Cys187–Thr191, and Cys198–Ala202.

The protein belongs to the KRTAP type 10 family. As to quaternary structure, interacts with hair keratins.

Functionally, in the hair cortex, hair keratin intermediate filaments are embedded in an interfilamentous matrix, consisting of hair keratin-associated proteins (KRTAP), which are essential for the formation of a rigid and resistant hair shaft through their extensive disulfide bond cross-linking with abundant cysteine residues of hair keratins. The matrix proteins include the high-sulfur and high-glycine-tyrosine keratins. The chain is Keratin-associated protein 10-8 from Bos taurus (Bovine).